Reading from the N-terminus, the 707-residue chain is Pheromone-processing carboxypeptidase KEX1 (707 aa).

Positions Met-1 to Ala-17 are cleaved as a signal peptide. The Lumenal portion of the chain corresponds to Ile-18 to Arg-564. N-linked (GlcNAc...) asparagine glycosylation is found at Asn-64 and Asn-121. Ser-183 is an active-site residue. N-linked (GlcNAc...) asparagine glycosylation is found at Asn-293 and Asn-378. Asp-393 is a catalytic residue. Asn-440 and Asn-448 each carry an N-linked (GlcNAc...) asparagine glycan. His-451 is an active-site residue. A disordered region spans residues Gly-496–Ser-557. Residues Glu-503–Asp-533 are compositionally biased toward basic and acidic residues. The span at Ser-536 to Ser-549 shows a compositional bias: low complexity. A helical membrane pass occupies residues Leu-565 to Tyr-585. Residues Arg-586 to Ser-707 are Cytoplasmic-facing. A disordered region spans residues Asn-644–Ser-707. The segment covering Ser-683–Glu-694 has biased composition (acidic residues). Basic and acidic residues predominate over residues Thr-695 to Ser-707.

Belongs to the peptidase S10 family.

Its subcellular location is the golgi apparatus. It is found in the trans-Golgi network membrane. The enzyme catalyses Preferential release of a C-terminal arginine or lysine residue.. In terms of biological role, protease with a carboxypeptidase B-like function involved in the C-terminal processing of the lysine and arginine residues from protein precursors. Promotes cell fusion and is involved in the programmed cell death. This is Pheromone-processing carboxypeptidase KEX1 (KEX1) from Candida tropicalis (strain ATCC MYA-3404 / T1) (Yeast).